Reading from the N-terminus, the 424-residue chain is UDP-N-acetylglucosamine 1-carboxyvinyltransferase 3 (424 aa).

A phosphoenolpyruvate-binding site is contributed by 22–23 (KN). Arg94 contributes to the UDP-N-acetyl-alpha-D-glucosamine binding site. Asp118 (proton donor) is an active-site residue. Residues 123–127 (RPVDQ), Asp306, and Leu328 each bind UDP-N-acetyl-alpha-D-glucosamine.

It belongs to the EPSP synthase family. MurA subfamily.

The protein resides in the cytoplasm. The enzyme catalyses phosphoenolpyruvate + UDP-N-acetyl-alpha-D-glucosamine = UDP-N-acetyl-3-O-(1-carboxyvinyl)-alpha-D-glucosamine + phosphate. It participates in cell wall biogenesis; peptidoglycan biosynthesis. Cell wall formation. Adds enolpyruvyl to UDP-N-acetylglucosamine. The sequence is that of UDP-N-acetylglucosamine 1-carboxyvinyltransferase 3 from Symbiobacterium thermophilum (strain DSM 24528 / JCM 14929 / IAM 14863 / T).